The chain runs to 343 residues: Isopentenyl-diphosphate delta-isomerase (343 aa).

Residue 9 to 10 (RK) participates in substrate binding. Residues S66, 67-69 (SMT), S98, and N126 each bind FMN. 98–100 (SQR) is a binding site for substrate. Residue Q161 participates in substrate binding. Mg(2+) is bound at residue E162. Residues K193, T223, 273–275 (GIR), and 294–295 (AA) contribute to the FMN site.

Belongs to the IPP isomerase type 2 family. As to quaternary structure, homooctamer. Dimer of tetramers. It depends on FMN as a cofactor. NADPH serves as cofactor. Mg(2+) is required as a cofactor.

The protein localises to the cytoplasm. It carries out the reaction isopentenyl diphosphate = dimethylallyl diphosphate. Involved in the biosynthesis of isoprenoids. Catalyzes the 1,3-allylic rearrangement of the homoallylic substrate isopentenyl (IPP) to its allylic isomer, dimethylallyl diphosphate (DMAPP). This chain is Isopentenyl-diphosphate delta-isomerase, found in Hydrogenovibrio crunogenus (strain DSM 25203 / XCL-2) (Thiomicrospira crunogena).